A 377-amino-acid chain; its full sequence is Chaperone protein DnaJ (377 aa).

The J domain occupies 5 to 70; the sequence is DYYEILGVSR…QKRAAYDQYG (66 aa). The CR-type zinc-finger motif lies at 132-210; sequence GVTKEIRIPT…CHGHGRIEKS (79 aa). The Zn(2+) site is built by Cys145, Cys148, Cys162, Cys165, Cys184, Cys187, Cys198, and Cys201. CXXCXGXG motif repeat units follow at residues 145–152, 162–169, 184–191, and 198–205; these read CDVCHGSG, CPTCHGAG, CPHCHGRG, and CNKCHGHG.

It belongs to the DnaJ family. Homodimer. Requires Zn(2+) as cofactor.

It is found in the cytoplasm. Its function is as follows. Participates actively in the response to hyperosmotic and heat shock by preventing the aggregation of stress-denatured proteins and by disaggregating proteins, also in an autonomous, DnaK-independent fashion. Unfolded proteins bind initially to DnaJ; upon interaction with the DnaJ-bound protein, DnaK hydrolyzes its bound ATP, resulting in the formation of a stable complex. GrpE releases ADP from DnaK; ATP binding to DnaK triggers the release of the substrate protein, thus completing the reaction cycle. Several rounds of ATP-dependent interactions between DnaJ, DnaK and GrpE are required for fully efficient folding. Also involved, together with DnaK and GrpE, in the DNA replication of plasmids through activation of initiation proteins. The polypeptide is Chaperone protein DnaJ (Edwardsiella ictaluri (strain 93-146)).